The primary structure comprises 142 residues: Large ribosomal subunit protein uL13c (142 aa).

It belongs to the universal ribosomal protein uL13 family. As to quaternary structure, part of the 50S ribosomal subunit.

The protein resides in the plastid. It localises to the chloroplast. This is Large ribosomal subunit protein uL13c from Pyropia yezoensis (Susabi-nori).